The following is a 272-amino-acid chain: Shikimate dehydrogenase (NADP(+)) (272 aa).

Shikimate contacts are provided by residues 14–16 (SKS) and Thr-61. Residue Lys-65 is the Proton acceptor of the active site. Glu-77 provides a ligand contact to NADP(+). Residues Asn-86 and Asp-102 each coordinate shikimate. NADP(+) is bound by residues 126–130 (GAGGA), 149–154 (NRTASR), and Met-213. Tyr-215 is a shikimate binding site. Residue Gly-237 coordinates NADP(+).

The protein belongs to the shikimate dehydrogenase family. As to quaternary structure, homodimer.

The catalysed reaction is shikimate + NADP(+) = 3-dehydroshikimate + NADPH + H(+). It participates in metabolic intermediate biosynthesis; chorismate biosynthesis; chorismate from D-erythrose 4-phosphate and phosphoenolpyruvate: step 4/7. In terms of biological role, involved in the biosynthesis of the chorismate, which leads to the biosynthesis of aromatic amino acids. Catalyzes the reversible NADPH linked reduction of 3-dehydroshikimate (DHSA) to yield shikimate (SA). The chain is Shikimate dehydrogenase (NADP(+)) from Salmonella heidelberg (strain SL476).